A 1410-amino-acid chain; its full sequence is Ribosome-binding protein 1 (1410 aa).

Topologically, residues 1–7 (MDIYDTQ) are lumenal. The helical transmembrane segment at 8–28 (TLGVVVFGGFMVVSAIGIFLV) threads the bilayer. The Cytoplasmic segment spans residues 29–1410 (STFSMKETSY…GSSSKEGTSV (1382 aa)). Disordered regions lie at residues 44–90 (NQRK…DPAP) and 129–152 (QEKL…VEPA). Over residues 52–63 (THHQKVEKKKKE) the composition is skewed to basic residues. The segment covering 64 to 88 (KTVEKKGKTKKKEEKPNGKIPDHDP) has biased composition (basic and acidic residues). Lysine 148 is covalently cross-linked (Glycyl lysine isopeptide (Lys-Gly) (interchain with G-Cter in SUMO2)). Phosphoserine is present on residues serine 159 and serine 165. Disordered regions lie at residues 173 to 648 (APKE…PLYL) and 895 to 925 (QSSH…LQSS). Composition is skewed to polar residues over residues 191–209 (TPAT…QNQS) and 225–238 (TPNQ…TPNQ). Repeat copies occupy residues 197 to 206 (TQGKKAEGTQ), 207 to 216 (NQSKKAEGAP), 217 to 226 (NQGRKAEGTP), 227 to 236 (NQGKKTEGTP), 237 to 246 (NQGKKAEGTP), 247 to 256 (NQGKKAEGTP), 257 to 266 (NQGKKAEGAQ), 267 to 276 (NQGKKVDTTP), 277 to 286 (NQGKKVEGAP), 287 to 296 (TQGRKAEGAQ), 297 to 306 (NQAKKVEGAQ), 307 to 316 (NQGKKAEGAQ), 317 to 326 (NQGKKGEGAQ), 327 to 336 (NQGKKAEGAQ), 337 to 346 (NQGKKAEGAQ), 347 to 356 (NQGKKAEGAQ), 357 to 366 (NQGKKAEGAQ), 367 to 376 (NQGKKAEGAQ), 377 to 386 (NQGKKAEGAQ), 387 to 396 (NQGKKVEGAQ), 397 to 406 (NQGKKAEGAQ), 407 to 416 (NQGKKAEGAQ), 417 to 426 (NQGKKAEGAQ), 427 to 436 (NQGKKAEGAQ), 437 to 446 (NQGKKAEGAQ), 447 to 456 (NQGKKAEGAQ), 457 to 466 (NQGKKAEGAQ), 467 to 476 (NQGKKVEGAQ), 477 to 486 (NQGKKAEGAQ), 487 to 496 (NQGKKAEGAQ), 497 to 506 (NQGKKAEGAQ), 507 to 516 (NQGQKGEGAQ), and 517 to 526 (NQGKKTEGAQ). Positions 197–604 (TQGKKAEGTQ…NQGKKTESAS (408 aa)) are 41 X 10 AA approximate tandem repeats of [TN]-Q-[GSA]-[KRQT]-K-[ATGSV]-[ED]-[GTAS]-[ATIS]-[PQTAS]. Phosphothreonine is present on residues threonine 225, threonine 235, threonine 245, and threonine 255. 2 stretches are compositionally biased toward polar residues: residues 265–278 (AQNQ…TPNQ) and 295–519 (AQNQ…QNQG). The span at 520 to 532 (KKTEGAQGKKAER) shows a compositional bias: basic and acidic residues. A 34; approximate repeat occupies 527–534 (GKKAERSP). Serine 533 carries the phosphoserine modification. The stretch at 535–544 (NQGKKGEGAP) is repeat 35. Residues 545-554 (IQGKKADSVA) form a 36; approximate repeat. Residues 553-567 (VANQGTKVEGITNQG) are compositionally biased toward polar residues. A run of 2 repeats spans residues 555-564 (NQGTKVEGIT) and 565-574 (NQGKKAEGSP). A compositionally biased stretch (basic and acidic residues) spans 568 to 581 (KKAEGSPSEGKKAE). Phosphoserine occurs at positions 573 and 583. One copy of the 39; approximate repeat lies at 575-584 (SEGKKAEGSP). 2 repeat units span residues 585-594 (NQGKKADAAA) and 595-604 (NQGKKTESAS). Residues 602 to 612 (SASVQGRNTDV) show a composition bias toward polar residues. A Phosphoserine modification is found at serine 615. Lysine 620 is covalently cross-linked (Glycyl lysine isopeptide (Lys-Gly) (interchain with G-Cter in SUMO1)). Phosphoserine is present on serine 900. Residue lysine 932 is modified to N6-acetyllysine. Serine 959 and serine 978 each carry phosphoserine. 4 disordered regions span residues 1093–1122 (GPTL…ETQS), 1260–1287 (EMKS…EQDP), 1330–1362 (EKLR…LTSD), and 1378–1410 (QEQL…GTSV). Serine 1276 and serine 1277 each carry phosphoserine. Composition is skewed to basic and acidic residues over residues 1347-1360 (SQLK…KKLT) and 1381-1403 (LARE…DGSS).

It localises to the endoplasmic reticulum membrane. Functionally, acts as a ribosome receptor and mediates interaction between the ribosome and the endoplasmic reticulum membrane. The protein is Ribosome-binding protein 1 (RRBP1) of Homo sapiens (Human).